Here is a 353-residue protein sequence, read N- to C-terminus: MGCGMSVEEKEGKARNEEIENQLKRDRMQQRNEIKMLLLGAGESGKSTILKQMKLIHEGGYSRDERESFKEIIYSNTVQSMRVILEAMESLELPLEDQRMEYHVQTIFMQPAQIEGEVLPPEVGNAIEALWKDRGVQECFKRSREYQLNDSARYYFDNIARIAAPDYMPDDQDVLRSRVKTTGITETTFIIGDLTYRMFDVGGQRSERKKWIHCFENVTTILFLVAISEYDQLLFEDETVNRMQEALTLFDSICNSRWFIKTSIILFLNKIDRFKEKLPISPMKNYFPDYEGGDDYAAACDYILNRFVNLNQHESKQIYTHFTCATDTTQIRFVMAAVNDIIIQENLRLCGLI.

A disordered region spans residues 1–26; the sequence is MGCGMSVEEKEGKARNEEIENQLKRD. G2 is lipidated: N-myristoyl glycine. Residue C3 is the site of S-palmitoyl cysteine attachment. Basic and acidic residues predominate over residues 7-26; the sequence is VEEKEGKARNEEIENQLKRD. In terms of domain architecture, G-alpha spans 32–353; the sequence is NEIKMLLLGA…QENLRLCGLI (322 aa). A G1 motif region spans residues 35–48; the sequence is KMLLLGAGESGKST. Positions 43, 44, 45, 46, 47, 48, 150, 175, 181, 203, 269, 270, 272, and 325 each coordinate GTP. Position 47 (S47) interacts with Mg(2+). A G2 motif region spans residues 173-181; it reads DVLRSRVKT. T181 is a binding site for Mg(2+). The tract at residues 196 to 205 is G3 motif; the sequence is YRMFDVGGQR. Residues 265 to 272 form a G4 motif region; sequence ILFLNKID. Residues 323 to 328 form a G5 motif region; that stretch reads TCATDT.

Belongs to the G-alpha family. G(q) subfamily. As to quaternary structure, g proteins are composed of 3 units; alpha, beta and gamma. The alpha chain contains the guanine nucleotide binding site. Mg(2+) is required as a cofactor.

Functionally, guanine nucleotide-binding proteins (G proteins) are involved as modulators or transducers in various transmembrane signaling systems. This Sporothrix schenckii (strain ATCC 58251 / de Perez 2211183) (Rose-picker's disease fungus) protein is Guanine nucleotide-binding protein subunit alpha (SSG-1).